Consider the following 584-residue polypeptide: Beta-fructofuranosidase, insoluble isoenzyme CWINV1 (584 aa).

The first 28 residues, 1 to 28 (MTKEVCSNIGLWLLLTLLIGNYVVNLEA), serve as a signal peptide directing secretion. Residues 63–66 (WMND), Gln-82, Trp-90, and 125–126 (WS) each bind substrate. Asp-66 is an active-site residue. N-linked (GlcNAc...) asparagine glycans are attached at residues Asn-159 and Asn-186. Substrate contacts are provided by residues 191–192 (RD), Glu-246, and Asp-282. N-linked (GlcNAc...) asparagine glycans are attached at residues Asn-342 and Asn-446. Cys-442 and Cys-491 are disulfide-bonded.

It belongs to the glycosyl hydrolase 32 family. Expressed in seedlings, leaves, flowers, and seeds.

It localises to the secreted. It is found in the extracellular space. The protein resides in the apoplast. Its subcellular location is the cell wall. The enzyme catalyses Hydrolysis of terminal non-reducing beta-D-fructofuranoside residues in beta-D-fructofuranosides.. In terms of biological role, beta-fructofuranosidase that can use sucrose and 1-kestose, and, to a lower extent, neokestose and levan, as substrates, but not inuline. The chain is Beta-fructofuranosidase, insoluble isoenzyme CWINV1 (CWINV1) from Arabidopsis thaliana (Mouse-ear cress).